The primary structure comprises 102 residues: NADH-quinone oxidoreductase subunit K (102 aa).

A run of 3 helical transmembrane segments spans residues 5 to 25 (LSHF…GIIL), 30 to 50 (IIVV…NLVS), and 62 to 82 (VFSL…LAIL).

The protein belongs to the complex I subunit 4L family. In terms of assembly, NDH-1 is composed of 14 different subunits. Subunits NuoA, H, J, K, L, M, N constitute the membrane sector of the complex.

Its subcellular location is the cell inner membrane. It catalyses the reaction a quinone + NADH + 5 H(+)(in) = a quinol + NAD(+) + 4 H(+)(out). NDH-1 shuttles electrons from NADH, via FMN and iron-sulfur (Fe-S) centers, to quinones in the respiratory chain. The immediate electron acceptor for the enzyme in this species is believed to be ubiquinone. Couples the redox reaction to proton translocation (for every two electrons transferred, four hydrogen ions are translocated across the cytoplasmic membrane), and thus conserves the redox energy in a proton gradient. The chain is NADH-quinone oxidoreductase subunit K from Methylocella silvestris (strain DSM 15510 / CIP 108128 / LMG 27833 / NCIMB 13906 / BL2).